The following is an 879-amino-acid chain: Leucine--tRNA ligase (879 aa).

Positions 45–55 (PYPSGALHMGH) match the 'HIGH' region motif. A 'KMSKS' region motif is present at residues 637-641 (KMSKS). Lys-640 provides a ligand contact to ATP.

It belongs to the class-I aminoacyl-tRNA synthetase family.

The protein resides in the cytoplasm. The enzyme catalyses tRNA(Leu) + L-leucine + ATP = L-leucyl-tRNA(Leu) + AMP + diphosphate. The polypeptide is Leucine--tRNA ligase (Xylella fastidiosa (strain M12)).